Consider the following 92-residue polypeptide: MKTLLLTLVVVTIVCLDLGYTRRCFITPDVRSERCPPGQEVCYTKTWCDGFCGSRGKRVDLGCAATCPTPKKKDIKIICCSKDNCNTFPKWP.

A signal peptide spans 1–21 (MKTLLLTLVVVTIVCLDLGYT). Disulfide bonds link Cys-24-Cys-42, Cys-35-Cys-63, Cys-48-Cys-52, Cys-67-Cys-79, and Cys-80-Cys-85.

Belongs to the three-finger toxin family. Long-chain subfamily. Type II alpha-neurotoxin sub-subfamily. Expressed by the venom gland.

It localises to the secreted. In terms of biological role, binds with high affinity to muscular (alpha-1/CHRNA1) and neuronal (alpha-7/CHRNA7) nicotinic acetylcholine receptor (nAChR) and inhibits acetylcholine from binding to the receptor, thereby impairing neuromuscular and neuronal transmission. This chain is Long neurotoxin 1, found in Oxyuranus microlepidotus (Inland taipan).